Consider the following 373-residue polypeptide: Histidinol-phosphate aminotransferase (373 aa).

K229 bears the N6-(pyridoxal phosphate)lysine mark.

It belongs to the class-II pyridoxal-phosphate-dependent aminotransferase family. Histidinol-phosphate aminotransferase subfamily. The cofactor is pyridoxal 5'-phosphate.

The catalysed reaction is L-histidinol phosphate + 2-oxoglutarate = 3-(imidazol-4-yl)-2-oxopropyl phosphate + L-glutamate. It functions in the pathway amino-acid biosynthesis; L-histidine biosynthesis; L-histidine from 5-phospho-alpha-D-ribose 1-diphosphate: step 7/9. The polypeptide is Histidinol-phosphate aminotransferase (hisC) (Methanothermobacter thermautotrophicus (strain ATCC 29096 / DSM 1053 / JCM 10044 / NBRC 100330 / Delta H) (Methanobacterium thermoautotrophicum)).